Consider the following 117-residue polypeptide: Large ribosomal subunit protein bL19 (117 aa).

It belongs to the bacterial ribosomal protein bL19 family.

This protein is located at the 30S-50S ribosomal subunit interface and may play a role in the structure and function of the aminoacyl-tRNA binding site. In Vibrio campbellii (strain ATCC BAA-1116), this protein is Large ribosomal subunit protein bL19.